The chain runs to 236 residues: Small ribosomal subunit protein uS3 (236 aa).

The region spanning 39 to 107 (IREFLTEELK…DTSLNIVEVR (69 aa)) is the KH type-2 domain. The disordered stretch occupies residues 214–236 (ASERRAVEGDNQGSSSNRRRENA).

Belongs to the universal ribosomal protein uS3 family. In terms of assembly, part of the 30S ribosomal subunit. Forms a tight complex with proteins S10 and S14.

In terms of biological role, binds the lower part of the 30S subunit head. Binds mRNA in the 70S ribosome, positioning it for translation. The chain is Small ribosomal subunit protein uS3 from Brucella anthropi (strain ATCC 49188 / DSM 6882 / CCUG 24695 / JCM 21032 / LMG 3331 / NBRC 15819 / NCTC 12168 / Alc 37) (Ochrobactrum anthropi).